A 244-amino-acid chain; its full sequence is Transcriptional activator protein PhzR (244 aa).

The 66-residue stretch at 177–242 (AFNTDVEFSE…QAVSYAVALG (66 aa)) folds into the HTH luxR-type domain. Positions 201–220 (SEEIGVIMGVCTDTVNYHHR) form a DNA-binding region, H-T-H motif.

The protein belongs to the autoinducer-regulated transcriptional regulatory protein family.

Positive regulator of phenazine antibiotic production. May activate the phenazine biosynthetic genes by binding to a DNA sequence upstream of them, or to an intermediate gene which, in turn, interacts with them. In Pseudomonas fluorescens, this protein is Transcriptional activator protein PhzR (phzR).